A 1338-amino-acid chain; its full sequence is Serine/threonine-protein kinase cek1 (1338 aa).

The PAS domain maps to 28-98 (SKDENLQPSI…RAVNCLLKDD (71 aa)). The disordered stretch occupies residues 484–554 (PDFAIGSPMS…GRSSLFSRGR (71 aa)). The segment covering 491-501 (PMSQDSSNYSS) has biased composition (polar residues). S525 is subject to Phosphoserine. The span at 541-550 (PASNGRSSLF) shows a compositional bias: polar residues. In terms of domain architecture, Protein kinase spans 589–958 (YKILKPISKG…VEEIKAHPFF (370 aa)). Residues 595-603 (ISKGAFGSV) and K618 each bind ATP. The active-site Proton acceptor is the D713. The residue at position 748 (S748) is a Phosphoserine. Positions 813–842 (ENSAEDSPTATNTPTSQVDESNIFRSTDSP) are enriched in polar residues. Disordered regions lie at residues 813-844 (ENSA…SPRV), 1010-1035 (KLEE…LRSN), and 1159-1185 (SSTM…TSSD). The region spanning 959–1057 (KSVNWDTILE…RNLDFLNKAN (99 aa)) is the AGC-kinase C-terminal domain. Low complexity predominate over residues 1159–1174 (SSTMSASQSQSSMHTA). A Phosphoserine modification is found at S1211.

Belongs to the protein kinase superfamily. Ser/Thr protein kinase family.

The enzyme catalyses L-seryl-[protein] + ATP = O-phospho-L-seryl-[protein] + ADP + H(+). It carries out the reaction L-threonyl-[protein] + ATP = O-phospho-L-threonyl-[protein] + ADP + H(+). Functionally, may facilitate the progression of anaphase through direct or indirect interaction with the cut8 protein. This is Serine/threonine-protein kinase cek1 (cek1) from Schizosaccharomyces pombe (strain 972 / ATCC 24843) (Fission yeast).